The primary structure comprises 231 residues: Cytidylate kinase (231 aa).

17-25 provides a ligand contact to ATP; that stretch reads GPTASGKGT.

Belongs to the cytidylate kinase family. Type 1 subfamily.

The protein localises to the cytoplasm. The catalysed reaction is CMP + ATP = CDP + ADP. It catalyses the reaction dCMP + ATP = dCDP + ADP. This is Cytidylate kinase from Ralstonia pickettii (strain 12J).